The primary structure comprises 942 residues: MKITFLLTWGDEMGGTEQAVYTQATHLAPRHDIEVLSVFKTREQPFFSVDERVSVRYLVDRTGKTERPVRESDLTAEDCRHLAGLPSDLISPKWEATFDALSDVEMQRALRTIDTDVLITTSPALMSAVADLAPSRVITIQQEHRPSQLRGGTGEPLLLRAPAIDALVVLTERTKQWLEESLGKAAPRLAAIPNAIPEGFRPRSSLTGKTIVMPRRLVPDKQVDHAIQAFAKALPDHPGWRLRIFGDGPQMSRLRNLIQGLGLHDSVELLGPSQHMTEEWARASLTILPSQDGEAFPLVLLEAFAAGVPAVAYDIVTGPAEIIRHGEDGLLVPPNDVESLAEAISRLMGDEALLRSYGEKAHEGSTRFAADVIVKQWEELFTELVSRRDDPRRMAERADRIAHRVAHGGAGRFHAAVAADRTAPSSGDQRAREVVIGASDRSLVRAGGRLSEVRDDLQGSEIVQRNFETVVEALESSGIPYVLLRDRDDNPRRRLAVDAAEQTRVRKALAGAYEGKAVYAELLKPRTHAPGVLLAERLEAVGEVAGLRVFRPVVTSTRTLRFGPAYGCDIEFWRQVPEEEGGDGQFVAPLRPSAVGPKLPSLTPDARTRVKDREYPTLEPLTRKLVSDITFPVDAVYTWVDDSDPRWQERRARRRAALGLEAESSGDEAARFRNRDELRYSLRSLAMFAPWIRKIYLVTDDQTPEWLNTEHEGIEVVSHRDIFTDQDCLPTFNSHSIESQLHHIDGLSEQFLYLNDDVFIGRPVGAQRFFLPNGASRFFWSPTTVPVGEPTEEDEGYFAAAKNNRALLEERFGVTVANSFVHAPHPLRRSVLESIEEDFPESVARTAATPMRGWQDISMVSSLHHHYGYLTGASVPSSIRCAYIDVGTYSRHPELTRLLAMRGHDVFCLGESQDAEVPEHEQARIVEAFLRAYFPVKSPYER.

The protein belongs to the stealth family.

This chain is Exopolysaccharide phosphotransferase SCO2592, found in Streptomyces coelicolor (strain ATCC BAA-471 / A3(2) / M145).